The sequence spans 793 residues: Facilitated trehalose transporter Tret1 (793 aa).

At 1–326 (MNRKVGPVLE…LEVYRPTTNP (326 aa)) the chain is on the cytoplasmic side. Disordered stretches follow at residues 99-148 (EKAK…EHKS) and 213-235 (RHISFKFDKEPSPSSSDEDFEPS). Residues 104-113 (KSSLKSSRVS) are compositionally biased toward low complexity. Acidic residues predominate over residues 115–125 (DQEDDRFDEDE). A compositionally biased stretch (basic and acidic residues) spans 213–223 (RHISFKFDKEP). Residues 327–347 (IYIWTQVLAALSVSLGSMVVG) traverse the membrane as a helical segment. Residues 348 to 376 (FSSAYTSPALVSMKDRNITSFEVTDQSGS) are Extracellular-facing. Asparagine 364 carries N-linked (GlcNAc...) asparagine glycosylation. A helical transmembrane segment spans residues 377 to 397 (WVGGIMPLAGLAGGILGGPMI). Residues 398–411 (EYLGRKNTILATAT) lie on the Cytoplasmic side of the membrane. A helical membrane pass occupies residues 412–432 (PFIISWLLIGCATHVAMVLVG). Over 433–434 (RA) the chain is Extracellular. A helical transmembrane segment spans residues 435–455 (LSGLCVGIASLSLPVYLGETV). Residues 456 to 460 (QPEVR) lie on the Cytoplasmic side of the membrane. The helical transmembrane segment at 461–481 (GTLGLLPTAFGNIGILLCFVA) threads the bilayer. The Extracellular segment spans residues 482–488 (GKYLDWS). A helical membrane pass occupies residues 489–509 (GLAFLGAALPIPFLLLMFLIP). Residues 510-572 (ETPRWYVSRN…DLLNKANLKP (63 aa)) lie on the Cytoplasmic side of the membrane. A helical membrane pass occupies residues 573-593 (LLISLGLMFFQQLSGINAVIF). At 594–609 (YTVQIFQSAGSTIDEK) the chain is on the extracellular side. The chain crosses the membrane as a helical span at residues 610–630 (LCTIIVGVVNFIATFIATVLI). Residues 631 to 636 (DRLGRK) are Cytoplasmic-facing. A helical membrane pass occupies residues 637 to 657 (ILLYISDVAMIITLMTLGTFF). Topologically, residues 658 to 668 (YMKNNGDDVSE) are extracellular. The helical transmembrane segment at 669–689 (IGWLPLAAFVVFVVGFSLGFG) threads the bilayer. Topologically, residues 690–703 (PIPWLMMGEILPGK) are cytoplasmic. A helical membrane pass occupies residues 704–724 (IRGSAASVATAFNWSCTFVVT). Residues 725 to 737 (KTFADITASIGNH) lie on the Extracellular side of the membrane. A helical transmembrane segment spans residues 738-758 (GAFWMFGSICIVGLLFVIVYV). Residues 759-793 (PETQGKSLEDIERKMMGRVRRMSSVANIKPLSFNM) lie on the Cytoplasmic side of the membrane.

It belongs to the major facilitator superfamily. Sugar transporter (TC 2.A.1.1) family. Trehalose transporter subfamily.

The protein localises to the cell membrane. In terms of biological role, high-capacity facilitative transporter for trehalose. Does not transport maltose, sucrose or lactose. Mediates the bidirectional transfer of trehalose. Responsible for the transport of trehalose synthesized in the fat body and the incorporation of trehalose into other tissues that require a carbon source, thereby regulating trehalose levels in the hemolymph. The sequence is that of Facilitated trehalose transporter Tret1 from Anopheles gambiae (African malaria mosquito).